Here is a 32-residue protein sequence, read N- to C-terminus: U3-ctenitoxin-Pk1a (32 aa).

Disulfide bonds link C3/C17, C10/C21, and C16/C30.

This sequence belongs to the neurotoxin 17 (21C2) family. In terms of tissue distribution, expressed by the venom gland.

It localises to the secreted. Functionally, may act as a neurotoxin. This chain is U3-ctenitoxin-Pk1a, found in Phoneutria keyserlingi (Brazilian wandering spider).